A 245-amino-acid chain; its full sequence is 1-(5-phosphoribosyl)-5-[(5-phosphoribosylamino)methylideneamino] imidazole-4-carboxamide isomerase (245 aa).

The Proton acceptor role is filled by aspartate 8. Aspartate 130 serves as the catalytic Proton donor.

Belongs to the HisA/HisF family.

Its subcellular location is the cytoplasm. It catalyses the reaction 1-(5-phospho-beta-D-ribosyl)-5-[(5-phospho-beta-D-ribosylamino)methylideneamino]imidazole-4-carboxamide = 5-[(5-phospho-1-deoxy-D-ribulos-1-ylimino)methylamino]-1-(5-phospho-beta-D-ribosyl)imidazole-4-carboxamide. Its pathway is amino-acid biosynthesis; L-histidine biosynthesis; L-histidine from 5-phospho-alpha-D-ribose 1-diphosphate: step 4/9. The chain is 1-(5-phosphoribosyl)-5-[(5-phosphoribosylamino)methylideneamino] imidazole-4-carboxamide isomerase from Pseudomonas aeruginosa (strain LESB58).